A 290-amino-acid chain; its full sequence is UPF0761 membrane protein YihY (290 aa).

The Cytoplasmic portion of the chain corresponds to 1–43 (MLKTVHQKAGRHTRPVRAWLKLLWQRIDEDNMTTLAGNLAYVS). The helical transmembrane segment at 44–64 (LLSLVPLIAVVFALFAAFPMF) threads the bilayer. The Periplasmic segment spans residues 65–103 (SDVSIQLRHFIFANFMPATGDVIQRYIEQFVANSNKMTA). The chain crosses the membrane as a helical span at residues 104-124 (VGACGLIVTALLLMYAIDSAL). Topologically, residues 125 to 139 (NTIWRSKRTRPKVYS) are cytoplasmic. Residues 140 to 160 (FAVYWMILTLGPLLAGVSLAI) traverse the membrane as a helical segment. Topologically, residues 161 to 179 (SSYLLSLRWASDLNTVIDN) are periplasmic. A helical membrane pass occupies residues 180-200 (VLHILPLLLSWISFWLLYSIV). Topologically, residues 201-209 (PTTRVPNRD) are cytoplasmic. Residues 210–230 (ALVGAFVAALLFEAGKKGFAL) form a helical membrane-spanning segment. At 231–243 (YITMFPSYQLIYG) the chain is on the periplasmic side. The chain crosses the membrane as a helical span at residues 244-264 (VLAVIPILFVWVYWTWCIVLL). Residues 265-290 (GAEITVTLGEYRKLKQAAEQEEADQP) lie on the Cytoplasmic side of the membrane.

The protein belongs to the UPF0761 family.

The protein resides in the cell inner membrane. This Salmonella typhimurium (strain LT2 / SGSC1412 / ATCC 700720) protein is UPF0761 membrane protein YihY.